Consider the following 296-residue polypeptide: MAVLAPLIALVYSVPRLSRWLAQPYYLLSALLSAAFLLVRKLPPLCHGLPTQREDGNPCDFDWREVEILMFLSAIVMMKNRRSITVEQHIGNIFMFSKVANAILFFRLDIRMGLLYITLCIVFLMTCKPPLYMGPEYIKYFNDKTIDEELERDKRVTWIVEFFANWANDCQSFAPIYADLSLKYNCTGLNFGKVDVGRYTDVSTRYKVSTSPLTKQLPTLILFQGGKEVMRRPQIDKKGRAVSWTFSEENVIREFNLNELYQRAKKLSKAGDNIPEEQPVAPTPTRVSDGESKKDK.

The first 48 residues, 1–48, serve as a signal peptide directing secretion; it reads MAVLAPLIALVYSVPRLSRWLAQPYYLLSALLSAAFLLVRKLPPLCHG. Topologically, residues 49-102 are extracellular; the sequence is LPTQREDGNPCDFDWREVEILMFLSAIVMMKNRRSITVEQHIGNIFMFSKVANA. Residues 103–125 form a helical membrane-spanning segment; that stretch reads ILFFRLDIRMGLLYITLCIVFLM. Residues 114–269 form the Thioredoxin domain; the sequence is LLYITLCIVF…LYQRAKKLSK (156 aa). Residues 126–296 lie on the Cytoplasmic side of the membrane; sequence TCKPPLYMGP…VSDGESKKDK (171 aa). 3 positions are modified to phosphoserine: Ser-211, Ser-243, and Ser-288. The segment at 269 to 296 is disordered; sequence KAGDNIPEEQPVAPTPTRVSDGESKKDK. Residues 293–296 carry the Di-lysine motif motif; sequence KKDK.

In terms of assembly, monomer. Homodimer; disulfide-linked. Occurs in both reduced and oxidized monomeric form. Oxidative conditions increase homodimerization. Interacts with CANX. Interacts with ATP2A2.

It localises to the endoplasmic reticulum membrane. The protein resides in the mitochondrion membrane. In terms of biological role, endoplasmic reticulum and mitochondria-associated protein that probably functions as a regulator of cellular redox state and thereby regulates protein post-translational modification, protein folding and mitochondrial activity. Indirectly regulates neuronal proliferation, migration, and organization in the developing brain. The sequence is that of Thioredoxin-related transmembrane protein 2 (TMX2) from Macaca fascicularis (Crab-eating macaque).